A 490-amino-acid chain; its full sequence is Aspartyl/glutamyl-tRNA(Asn/Gln) amidotransferase subunit B (490 aa).

The protein belongs to the GatB/GatE family. GatB subfamily. In terms of assembly, heterotrimer of A, B and C subunits.

The enzyme catalyses L-glutamyl-tRNA(Gln) + L-glutamine + ATP + H2O = L-glutaminyl-tRNA(Gln) + L-glutamate + ADP + phosphate + H(+). It carries out the reaction L-aspartyl-tRNA(Asn) + L-glutamine + ATP + H2O = L-asparaginyl-tRNA(Asn) + L-glutamate + ADP + phosphate + 2 H(+). Functionally, allows the formation of correctly charged Asn-tRNA(Asn) or Gln-tRNA(Gln) through the transamidation of misacylated Asp-tRNA(Asn) or Glu-tRNA(Gln) in organisms which lack either or both of asparaginyl-tRNA or glutaminyl-tRNA synthetases. The reaction takes place in the presence of glutamine and ATP through an activated phospho-Asp-tRNA(Asn) or phospho-Glu-tRNA(Gln). In Burkholderia mallei (strain NCTC 10247), this protein is Aspartyl/glutamyl-tRNA(Asn/Gln) amidotransferase subunit B.